We begin with the raw amino-acid sequence, 258 residues long: Acyl-[acyl-carrier-protein]--UDP-N-acetylglucosamine O-acyltransferase (258 aa).

It belongs to the transferase hexapeptide repeat family. LpxA subfamily. As to quaternary structure, homotrimer.

Its subcellular location is the cytoplasm. The catalysed reaction is a (3R)-hydroxyacyl-[ACP] + UDP-N-acetyl-alpha-D-glucosamine = a UDP-3-O-[(3R)-3-hydroxyacyl]-N-acetyl-alpha-D-glucosamine + holo-[ACP]. The protein operates within glycolipid biosynthesis; lipid IV(A) biosynthesis; lipid IV(A) from (3R)-3-hydroxytetradecanoyl-[acyl-carrier-protein] and UDP-N-acetyl-alpha-D-glucosamine: step 1/6. Its function is as follows. Involved in the biosynthesis of lipid A, a phosphorylated glycolipid that anchors the lipopolysaccharide to the outer membrane of the cell. In Neisseria meningitidis serogroup A / serotype 4A (strain DSM 15465 / Z2491), this protein is Acyl-[acyl-carrier-protein]--UDP-N-acetylglucosamine O-acyltransferase.